A 426-amino-acid chain; its full sequence is Serine hydroxymethyltransferase (426 aa).

(6S)-5,6,7,8-tetrahydrofolate contacts are provided by residues leucine 121 and 125-127; that span reads GHL. An N6-(pyridoxal phosphate)lysine modification is found at lysine 230. 354–356 provides a ligand contact to (6S)-5,6,7,8-tetrahydrofolate; it reads SPF.

The protein belongs to the SHMT family. As to quaternary structure, homodimer. It depends on pyridoxal 5'-phosphate as a cofactor.

It localises to the cytoplasm. The catalysed reaction is (6R)-5,10-methylene-5,6,7,8-tetrahydrofolate + glycine + H2O = (6S)-5,6,7,8-tetrahydrofolate + L-serine. Its pathway is one-carbon metabolism; tetrahydrofolate interconversion. The protein operates within amino-acid biosynthesis; glycine biosynthesis; glycine from L-serine: step 1/1. In terms of biological role, catalyzes the reversible interconversion of serine and glycine with tetrahydrofolate (THF) serving as the one-carbon carrier. This reaction serves as the major source of one-carbon groups required for the biosynthesis of purines, thymidylate, methionine, and other important biomolecules. Also exhibits THF-independent aldolase activity toward beta-hydroxyamino acids, producing glycine and aldehydes, via a retro-aldol mechanism. This is Serine hydroxymethyltransferase from Gloeobacter violaceus (strain ATCC 29082 / PCC 7421).